Reading from the N-terminus, the 174-residue chain is Large ribosomal subunit protein bL17 (174 aa).

This sequence belongs to the bacterial ribosomal protein bL17 family. Part of the 50S ribosomal subunit. Contacts protein L32.

In Ruminiclostridium cellulolyticum (strain ATCC 35319 / DSM 5812 / JCM 6584 / H10) (Clostridium cellulolyticum), this protein is Large ribosomal subunit protein bL17.